The chain runs to 307 residues: tRNA dimethylallyltransferase (307 aa).

Residue 10-17 (GPTAVGKT) participates in ATP binding. Position 12–17 (12–17 (TAVGKT)) interacts with substrate. The tract at residues 35-38 (DSMQ) is interaction with substrate tRNA.

It belongs to the IPP transferase family. In terms of assembly, monomer. Mg(2+) is required as a cofactor.

The catalysed reaction is adenosine(37) in tRNA + dimethylallyl diphosphate = N(6)-dimethylallyladenosine(37) in tRNA + diphosphate. Functionally, catalyzes the transfer of a dimethylallyl group onto the adenine at position 37 in tRNAs that read codons beginning with uridine, leading to the formation of N6-(dimethylallyl)adenosine (i(6)A). The polypeptide is tRNA dimethylallyltransferase (Ligilactobacillus salivarius (strain UCC118) (Lactobacillus salivarius)).